Consider the following 331-residue polypeptide: MAEADTERRPHIPVLLRPLLAAVAPVEGTWLDGTFGAGGYARGLLEAGADRVIGVDRDPLALKMASGWAGDYGDRLRLVAGTFSQLDSHAGAPLDGVVLDLGVSSMQLDLAERGFSFQKDGPLDMRMSQEGESAADLVNTASEESLADILYHYGEERASRRIARAIVEARAAAPITRTLALAEIVARCLPRPKPGQMHPATRSFQAIRIAVNAEFSELVEGLEAAERALRPGGRLAVVTFHSLEDRIVKRFLQLRSGGEGQGNRYAPETRAYAPRFTLPLRRAISPDEAELAENPRARSARLRVGVRTDAPAGKVDPQALGTPLIPKKGRR.

Residues 38–40 (GGY), D56, F83, D100, and Q107 each bind S-adenosyl-L-methionine. Residues 289–331 (AELAENPRARSARLRVGVRTDAPAGKVDPQALGTPLIPKKGRR) form a disordered region.

It belongs to the methyltransferase superfamily. RsmH family.

It localises to the cytoplasm. It carries out the reaction cytidine(1402) in 16S rRNA + S-adenosyl-L-methionine = N(4)-methylcytidine(1402) in 16S rRNA + S-adenosyl-L-homocysteine + H(+). Its function is as follows. Specifically methylates the N4 position of cytidine in position 1402 (C1402) of 16S rRNA. In Cereibacter sphaeroides (strain ATCC 17029 / ATH 2.4.9) (Rhodobacter sphaeroides), this protein is Ribosomal RNA small subunit methyltransferase H.